We begin with the raw amino-acid sequence, 490 residues long: tRNA-guanine(15) transglycosylase (490 aa).

The Nucleophile role is filled by Asp-92. Substrate is bound by residues Asp-127 and Ala-195. Residues Cys-278, Cys-280, and Cys-283 each coordinate Zn(2+).

Belongs to the archaeosine tRNA-ribosyltransferase family. The cofactor is Zn(2+).

The catalysed reaction is guanosine(15) in tRNA + 7-cyano-7-deazaguanine = 7-cyano-7-carbaguanosine(15) in tRNA + guanine. Its pathway is tRNA modification; archaeosine-tRNA biosynthesis. In terms of biological role, exchanges the guanine residue with 7-cyano-7-deazaguanine (preQ0) at position 15 in the dihydrouridine loop (D-loop) of archaeal tRNAs. In Haloarcula marismortui (strain ATCC 43049 / DSM 3752 / JCM 8966 / VKM B-1809) (Halobacterium marismortui), this protein is tRNA-guanine(15) transglycosylase.